A 490-amino-acid polypeptide reads, in one-letter code: Cytochrome P450 2C54 (490 aa).

Phosphoserine is present on Ser127. Residues Lys252 and Lys375 each carry the N6-acetyllysine modification. Heme is bound at residue Cys435.

It belongs to the cytochrome P450 family. The cofactor is heme. Expressed in liver.

It is found in the endoplasmic reticulum membrane. The protein resides in the microsome membrane. The enzyme catalyses an organic molecule + reduced [NADPH--hemoprotein reductase] + O2 = an alcohol + oxidized [NADPH--hemoprotein reductase] + H2O + H(+). In terms of biological role, metabolizes arachidonic acid mainly to 12-hydroxyeicosatetraenoic acid (HETE). This chain is Cytochrome P450 2C54, found in Mus musculus (Mouse).